The primary structure comprises 156 residues: Probable cyclic pyranopterin monophosphate synthase (156 aa).

Position 109–110 (109–110 (MD)) interacts with substrate. Residue Asp-124 is part of the active site.

The protein belongs to the MoaC family. As to quaternary structure, homohexamer; trimer of dimers.

The catalysed reaction is (8S)-3',8-cyclo-7,8-dihydroguanosine 5'-triphosphate = cyclic pyranopterin phosphate + diphosphate. The protein operates within cofactor biosynthesis; molybdopterin biosynthesis. Its function is as follows. Catalyzes the conversion of (8S)-3',8-cyclo-7,8-dihydroguanosine 5'-triphosphate to cyclic pyranopterin monophosphate (cPMP). The sequence is that of Probable cyclic pyranopterin monophosphate synthase from Methanopyrus kandleri (strain AV19 / DSM 6324 / JCM 9639 / NBRC 100938).